Here is a 215-residue protein sequence, read N- to C-terminus: Histone H1.1 (215 aa).

The segment at 1-43 (MSETVPPAPAASAAPEKPLAGKKAKKPAKAAAASKKKPAGPSV) is disordered. S2 is subject to N-acetylserine. Phosphoserine is present on residues S2 and S12. K17 is modified (N6-acetyllysine). Basic residues predominate over residues 20–38 (AGKKAKKPAKAAAASKKKP). At K37 the chain carries N6-(beta-hydroxybutyryl)lysine. Residues 39 to 112 (AGPSVSELIV…GASGSFKLNK (74 aa)) form the H15 domain. A Phosphoserine modification is found at S44. N6-(beta-hydroxybutyryl)lysine is present on K55. R57 bears the Citrulline mark. K67 carries the post-translational modification N6-(beta-hydroxybutyryl)lysine. N6-acetyllysine is present on K78. An N6-(beta-hydroxybutyryl)lysine modification is found at K88. N6-(beta-hydroxybutyryl)lysine; alternate is present on K93. An N6-acetyllysine; alternate modification is found at K93. Residues 94–215 (GTLVQTKGTG…KPKKAAPKKK (122 aa)) are disordered. S107 is modified (phosphoserine). Residue K109 is modified to N6-(beta-hydroxybutyryl)lysine. A compositionally biased stretch (low complexity) spans 122 to 147 (GASKVATKTKATGASKKLKKATGASK). An N6-acetyllysine modification is found at K125. Basic residues-rich tracts occupy residues 148–181 (KSVKTPKKAKKPAATRKSSKNPKKPKTVKPKKVA) and 188–215 (KAVKPKAAKARVTKPKTAKPKKAAPKKK). The residue at position 204 (T204) is a Phosphothreonine.

Belongs to the histone H1/H5 family. Interacts with DFFB. In terms of processing, H1 histones are progressively phosphorylated during the cell cycle, becoming maximally phosphorylated during late G2 phase and M phase, and being dephosphorylated sharply thereafter. Citrullination at Arg-57 (H1R54ci) by PADI4 takes place within the DNA-binding site of H1 and results in its displacement from chromatin and global chromatin decondensation, thereby promoting pluripotency and stem cell maintenance.

It is found in the nucleus. The protein localises to the chromosome. Histone H1 protein binds to linker DNA between nucleosomes forming the macromolecular structure known as the chromatin fiber. Histones H1 are necessary for the condensation of nucleosome chains into higher-order structured fibers. Also acts as a regulator of individual gene transcription through chromatin remodeling, nucleosome spacing and DNA methylation. The sequence is that of Histone H1.1 from Homo sapiens (Human).